The sequence spans 372 residues: MSKRDYYEVLGVAKNASDEEIKKAYRKLAMKHHPDRNPGDHAAEDKFKEAKQAYEILSDSDKRAAYDQFGHAGVDPQSGMGGGGFGGGGFSDAFSDIFGDIFGGGGGNRRDRVYRGADLRYNLEIGLEEAARGTETKIRIPTLEECGTCHGSGAKPGTQPTTCSACGGHGQVRVQQGFFSVQQTCPRCGGTGKMVSDPCPSCHGEGRVKKHKTLSVKIPAGVDSGDRIRLAGEGEAGVNGGPSGDLYVVIHLKDHPVFKRDGDDLHCEMPISFATAALGGEVEIPTLDGHAKIKIPAETQSGKVFRLRGKGIKGVRSHAPGDLLCHMLVETPVNLSERQRELLREFEALSPGRNNNPRAQSFMDKVKSFFGT.

In terms of domain architecture, J spans 5–70 (DYYEVLGVAK…DKRAAYDQFG (66 aa)). The CR-type zinc-finger motif lies at 133 to 211 (GTETKIRIPT…CHGEGRVKKH (79 aa)). C146, C149, C163, C166, C185, C188, C199, and C202 together coordinate Zn(2+). 4 CXXCXGXG motif repeats span residues 146–153 (CGTCHGSG), 163–170 (CSACGGHG), 185–192 (CPRCGGTG), and 199–206 (CPSCHGEG).

Belongs to the DnaJ family. As to quaternary structure, homodimer. Zn(2+) is required as a cofactor.

The protein localises to the cytoplasm. Functionally, participates actively in the response to hyperosmotic and heat shock by preventing the aggregation of stress-denatured proteins and by disaggregating proteins, also in an autonomous, DnaK-independent fashion. Unfolded proteins bind initially to DnaJ; upon interaction with the DnaJ-bound protein, DnaK hydrolyzes its bound ATP, resulting in the formation of a stable complex. GrpE releases ADP from DnaK; ATP binding to DnaK triggers the release of the substrate protein, thus completing the reaction cycle. Several rounds of ATP-dependent interactions between DnaJ, DnaK and GrpE are required for fully efficient folding. Also involved, together with DnaK and GrpE, in the DNA replication of plasmids through activation of initiation proteins. In Thiobacillus denitrificans (strain ATCC 25259 / T1), this protein is Chaperone protein DnaJ.